Consider the following 593-residue polypeptide: Probable metalloendopeptidase G1-type (593 aa).

H41 serves as a coordination point for Zn(2+). The active site involves E44. H45 provides a ligand contact to Zn(2+).

The protein belongs to the peptidase M44 family. Zn(2+) serves as cofactor.

In terms of biological role, seems to be involved in viral proteins maturation by cleavage at Ala-Gly-|-Xaa motifs. This Homo sapiens (Human) protein is Probable metalloendopeptidase G1-type.